Here is a 393-residue protein sequence, read N- to C-terminus: Major outer membrane protein P.IA (393 aa).

Residues 1 to 19 (MRKKLTALVLSALPLAAVA) form the signal peptide.

The protein belongs to the Gram-negative porin family. As to quaternary structure, homotrimer.

The protein localises to the cell outer membrane. In terms of biological role, serves as a slightly cation selective porin. Major antigen on the gonococcal cell surface and it may have pathogenic properties in addition to its porin activity. This Neisseria meningitidis serogroup C protein is Major outer membrane protein P.IA (porA).